A 678-amino-acid polypeptide reads, in one-letter code: DNA ligase (678 aa).

NAD(+)-binding positions include 35–39, 84–85, and Glu-115; these read DEEYD and SL. The active-site N6-AMP-lysine intermediate is the Lys-117. Arg-138, Glu-172, Lys-288, and Lys-312 together coordinate NAD(+). Residues Cys-406, Cys-409, Cys-425, and Cys-430 each coordinate Zn(2+). A BRCT domain is found at 589-678; it reads VQSKILSNLT…IKNLRQQKLF (90 aa).

It belongs to the NAD-dependent DNA ligase family. LigA subfamily. The cofactor is Mg(2+). Requires Mn(2+) as cofactor.

The enzyme catalyses NAD(+) + (deoxyribonucleotide)n-3'-hydroxyl + 5'-phospho-(deoxyribonucleotide)m = (deoxyribonucleotide)n+m + AMP + beta-nicotinamide D-nucleotide.. In terms of biological role, DNA ligase that catalyzes the formation of phosphodiester linkages between 5'-phosphoryl and 3'-hydroxyl groups in double-stranded DNA using NAD as a coenzyme and as the energy source for the reaction. It is essential for DNA replication and repair of damaged DNA. This Pseudothermotoga lettingae (strain ATCC BAA-301 / DSM 14385 / NBRC 107922 / TMO) (Thermotoga lettingae) protein is DNA ligase.